Consider the following 283-residue polypeptide: uncharacterized protein (283 aa).

A compositionally biased stretch (basic and acidic residues) spans 208–232 (SMENKVNETQNSKEDEKKKNDGDGK). The interval 208–237 (SMENKVNETQNSKEDEKKKNDGDGKRSKKK) is disordered.

This is an uncharacterized protein from Saccharomyces cerevisiae (strain ATCC 204508 / S288c) (Baker's yeast).